Here is a 157-residue protein sequence, read N- to C-terminus: Phosphopantetheine adenylyltransferase (157 aa).

S9 contacts substrate. ATP-binding positions include 9-10 and H17; that span reads SF. 3 residues coordinate substrate: K41, L73, and K87. ATP contacts are provided by residues 88-90, E98, and 123-129; these read GLR and YSYLSSS.

This sequence belongs to the bacterial CoaD family. In terms of assembly, homohexamer. Mg(2+) is required as a cofactor.

Its subcellular location is the cytoplasm. It catalyses the reaction (R)-4'-phosphopantetheine + ATP + H(+) = 3'-dephospho-CoA + diphosphate. It functions in the pathway cofactor biosynthesis; coenzyme A biosynthesis; CoA from (R)-pantothenate: step 4/5. In terms of biological role, reversibly transfers an adenylyl group from ATP to 4'-phosphopantetheine, yielding dephospho-CoA (dPCoA) and pyrophosphate. This chain is Phosphopantetheine adenylyltransferase, found in Alkaliphilus metalliredigens (strain QYMF).